Here is a 260-residue protein sequence, read N- to C-terminus: Global transcriptional regulator CodY (260 aa).

Residues methionine 1–leucine 159 form a GAF domain region. Residues alanine 207 to arginine 226 constitute a DNA-binding region (H-T-H motif).

It belongs to the CodY family.

It is found in the cytoplasm. Functionally, DNA-binding global transcriptional regulator which is involved in the adaptive response to starvation and acts by directly or indirectly controlling the expression of numerous genes in response to nutrient availability. During rapid exponential growth, CodY is highly active and represses genes whose products allow adaptation to nutrient depletion. The protein is Global transcriptional regulator CodY of Streptococcus pyogenes serotype M4 (strain MGAS10750).